We begin with the raw amino-acid sequence, 402 residues long: uncharacterized protein (402 aa).

The next 11 helical transmembrane spans lie at F12 to V32, G48 to A68, T80 to T100, A101 to L121, G134 to V154, Q168 to L188, W212 to F232, W248 to A268, G291 to G311, M339 to F359, and M367 to G387.

This sequence belongs to the major facilitator superfamily. Cyanate porter (TC 2.A.1.17) family.

The protein resides in the cell membrane. This is an uncharacterized protein from Bacillus subtilis (strain 168).